We begin with the raw amino-acid sequence, 199 residues long: Pre T-cell antigen receptor alpha (199 aa).

An N-terminal signal peptide occupies residues 1–16; it reads MARTWLLLFLGLRCQA. At 17–155 the chain is on the extracellular side; sequence LPSGIAGTPF…RQVLRLSVLR (139 aa). C47 and C107 are disulfide-bonded. N67 and N117 each carry an N-linked (GlcNAc...) asparagine glycan. The interval 117–139 is disordered; sequence NRSTHPLQLSGEEASTDRTCPQE. Residues 156–176 traverse the membrane as a helical segment; sequence LLLFKLLLLDVFLTCSRLCVL. Topologically, residues 177–199 are cytoplasmic; sequence AGQHLLPPPSSKQAPASTHQSWT.

In terms of assembly, heterodimer with TCRB; disulfide linked. This heterodimer assembles with CD3 proteins into a signaling-competent pre-T-cell receptor complex. Interacts with RHBDD1. In terms of tissue distribution, found in CD45+ but not in the CD45- fetal liver cells.

The protein localises to the membrane. It localises to the cell membrane. Component of the pre-T-cell receptor complex (composed of PTCRA, TCRB and the CD3 complex) that has a crucial role in early T-cell development, particularly alpha-beta T cell differentiation. The chain is Pre T-cell antigen receptor alpha from Rattus norvegicus (Rat).